Consider the following 567-residue polypeptide: tRNA (uracil-O(2)-)-methyltransferase (567 aa).

A Phosphoserine modification is found at S107.

This sequence belongs to the TRM44 family.

It localises to the cytoplasm. It carries out the reaction uridine(44) in tRNA(Ser) + S-adenosyl-L-methionine = 2'-O-methyluridine(44) in tRNA(Ser) + S-adenosyl-L-homocysteine + H(+). Functionally, tRNA (uracil-O(2)-)-methyltransferase, which catalyzes the formation of O(2)-methyluracil at position 44 (Um44) in tRNA(Ser). This chain is tRNA (uracil-O(2)-)-methyltransferase (TRM44), found in Saccharomyces cerevisiae (strain ATCC 204508 / S288c) (Baker's yeast).